We begin with the raw amino-acid sequence, 245 residues long: Ribonuclease 3 (245 aa).

The RNase III domain maps to 17 to 146; that stretch reads FAKKMNELGF…FVGALYLDQG (130 aa). Glutamate 59 contributes to the Mg(2+) binding site. Aspartate 63 is an active-site residue. Positions 132 and 135 each coordinate Mg(2+). Residue glutamate 135 is part of the active site. The DRBM domain occupies 172–241; the sequence is DFKTQFQEYV…AESAYSKLKS (70 aa). A disordered region spans residues 217–245; it reads ATGQGKTKKESEQKAAESAYSKLKSNNNL.

It belongs to the ribonuclease III family. In terms of assembly, homodimer. It depends on Mg(2+) as a cofactor.

The protein localises to the cytoplasm. It carries out the reaction Endonucleolytic cleavage to 5'-phosphomonoester.. In terms of biological role, digests double-stranded RNA. Involved in the processing of primary rRNA transcript to yield the immediate precursors to the large and small rRNAs (23S and 16S). Processes some mRNAs, and tRNAs when they are encoded in the rRNA operon. Processes pre-crRNA and tracrRNA of type II CRISPR loci if present in the organism. This chain is Ribonuclease 3, found in Staphylococcus haemolyticus (strain JCSC1435).